Consider the following 300-residue polypeptide: Ribosomal protein L11 methyltransferase (300 aa).

Positions 152, 173, 195, and 234 each coordinate S-adenosyl-L-methionine.

The protein belongs to the methyltransferase superfamily. PrmA family.

It localises to the cytoplasm. It carries out the reaction L-lysyl-[protein] + 3 S-adenosyl-L-methionine = N(6),N(6),N(6)-trimethyl-L-lysyl-[protein] + 3 S-adenosyl-L-homocysteine + 3 H(+). Its function is as follows. Methylates ribosomal protein L11. This chain is Ribosomal protein L11 methyltransferase, found in Cupriavidus necator (strain ATCC 17699 / DSM 428 / KCTC 22496 / NCIMB 10442 / H16 / Stanier 337) (Ralstonia eutropha).